The following is a 167-amino-acid chain: Ribosome maturation factor RimM (167 aa).

Residues Asp-92–Gln-166 form the PRC barrel domain.

It belongs to the RimM family. In terms of assembly, binds ribosomal protein uS19.

It localises to the cytoplasm. Its function is as follows. An accessory protein needed during the final step in the assembly of 30S ribosomal subunit, possibly for assembly of the head region. Essential for efficient processing of 16S rRNA. May be needed both before and after RbfA during the maturation of 16S rRNA. It has affinity for free ribosomal 30S subunits but not for 70S ribosomes. This is Ribosome maturation factor RimM from Paracoccus denitrificans (strain Pd 1222).